Reading from the N-terminus, the 756-residue chain is 5-methyltetrahydropteroyltriglutamate--homocysteine methyltransferase (756 aa).

5-methyltetrahydropteroyltri-L-glutamate is bound by residues 15-18 and Lys-111; that span reads REWK. The tract at residues 392–411 is disordered; that stretch reads GAATSHNLENKKRPQSFNER. Residues 399–411 show a composition bias toward basic and acidic residues; it reads LENKKRPQSFNER. L-homocysteine-binding positions include 429 to 431 and Glu-482; that span reads IGS. Residues 429-431 and Glu-482 contribute to the L-methionine site; that span reads IGS. Residues 513–514 and Trp-559 each bind 5-methyltetrahydropteroyltri-L-glutamate; that span reads RC. Asp-597 contacts L-homocysteine. Asp-597 is a binding site for L-methionine. Residue Glu-603 participates in 5-methyltetrahydropteroyltri-L-glutamate binding. The Zn(2+) site is built by His-639, Cys-641, and Glu-663. The active-site Proton donor is the His-692. Cys-724 provides a ligand contact to Zn(2+).

The protein belongs to the vitamin-B12 independent methionine synthase family. Zn(2+) is required as a cofactor.

The catalysed reaction is 5-methyltetrahydropteroyltri-L-glutamate + L-homocysteine = tetrahydropteroyltri-L-glutamate + L-methionine. Its pathway is amino-acid biosynthesis; L-methionine biosynthesis via de novo pathway; L-methionine from L-homocysteine (MetE route): step 1/1. Its function is as follows. Catalyzes the transfer of a methyl group from 5-methyltetrahydrofolate to homocysteine resulting in methionine formation. The protein is 5-methyltetrahydropteroyltriglutamate--homocysteine methyltransferase of Halalkalibacterium halodurans (strain ATCC BAA-125 / DSM 18197 / FERM 7344 / JCM 9153 / C-125) (Bacillus halodurans).